Here is a 454-residue protein sequence, read N- to C-terminus: Chromosomal replication initiator protein DnaA (454 aa).

A domain I, interacts with DnaA modulators region spans residues 1 to 77; the sequence is MASLNENQKF…GFEVFGRMID (77 aa). Positions 77–115 are domain II; it reads DYELYANDELTDIELRRLNNQSPVDEPLSVAKPTSPLVS. Residues 116–332 are domain III, AAA+ region; the sequence is GLNEKYNFEN…GALNRVEFVA (217 aa). Residues G160, G162, K163, and T164 each contribute to the ATP site. A domain IV, binds dsDNA region spans residues 333–454; sequence RANGISIVDI…KDIDSIKRKF (122 aa).

The protein belongs to the DnaA family. In terms of assembly, oligomerizes as a right-handed, spiral filament on DNA at oriC.

It localises to the cytoplasm. In terms of biological role, plays an essential role in the initiation and regulation of chromosomal replication. ATP-DnaA binds to the origin of replication (oriC) to initiate formation of the DNA replication initiation complex once per cell cycle. Binds the DnaA box (a 9 base pair repeat at the origin) and separates the double-stranded (ds)DNA. Forms a right-handed helical filament on oriC DNA; dsDNA binds to the exterior of the filament while single-stranded (ss)DNA is stabiized in the filament's interior. The ATP-DnaA-oriC complex binds and stabilizes one strand of the AT-rich DNA unwinding element (DUE), permitting loading of DNA polymerase. After initiation quickly degrades to an ADP-DnaA complex that is not apt for DNA replication. Binds acidic phospholipids. The chain is Chromosomal replication initiator protein DnaA from Lactococcus lactis subsp. cremoris (strain MG1363).